A 410-amino-acid chain; its full sequence is Metacaspase-1B (410 aa).

Residues 1-106 (MYHRNSAPPP…SFGKGAPSNY (106 aa)) are disordered. Composition is skewed to pro residues over residues 7-23 (APPP…PQSQ) and 32-52 (PPYP…PPPT). Active-site residues include His-201 and Cys-257.

This sequence belongs to the peptidase C14B family.

Functionally, involved in cell death (apoptosis). In Aspergillus clavatus (strain ATCC 1007 / CBS 513.65 / DSM 816 / NCTC 3887 / NRRL 1 / QM 1276 / 107), this protein is Metacaspase-1B (casB).